The chain runs to 703 residues: Polyribonucleotide nucleotidyltransferase (703 aa).

Residues Asp-485 and Asp-491 each coordinate Mg(2+). Residues 552-611 (PRIYTLKIDQDKIRDVIGKGGAMIRSITEASDTNIEIEDDGTIKIFATERAKADIAISKI) enclose the KH domain. Residues 621–689 (GKTYEGKVTR…RQNRVRLSIK (69 aa)) form the S1 motif domain.

This sequence belongs to the polyribonucleotide nucleotidyltransferase family. In terms of assembly, component of the RNA degradosome, which is a multiprotein complex involved in RNA processing and mRNA degradation. Requires Mg(2+) as cofactor.

The protein localises to the cytoplasm. The enzyme catalyses RNA(n+1) + phosphate = RNA(n) + a ribonucleoside 5'-diphosphate. Its function is as follows. Involved in mRNA degradation. Catalyzes the phosphorolysis of single-stranded polyribonucleotides processively in the 3'- to 5'-direction. This is Polyribonucleotide nucleotidyltransferase from Pseudoalteromonas atlantica (strain T6c / ATCC BAA-1087).